Consider the following 152-residue polypeptide: Large ribosomal subunit protein uL30 (152 aa).

Belongs to the universal ribosomal protein uL30 family. As to quaternary structure, part of the 50S ribosomal subunit.

This chain is Large ribosomal subunit protein uL30, found in Archaeoglobus fulgidus (strain ATCC 49558 / DSM 4304 / JCM 9628 / NBRC 100126 / VC-16).